A 1577-amino-acid chain; its full sequence is Hemolysin (1577 aa).

An N-terminal signal peptide occupies residues 1-29 (MKSKNFKLSPSGRLAASLAIIFVSLNAYG). A compositionally biased stretch (basic and acidic residues) spans 437 to 446 (EKESRSENGN). Disordered regions lie at residues 437–467 (EKESRSENGNKRNHTSRLESGSWSNSHQTET), 1081–1103 (TDTHSESQSNVNGSANLKVGTTP), 1169–1188 (QSASSEHTEKGNNLSGGVQA), and 1213–1232 (KQDEKSVSREGGTINNSGNL). Polar residues-rich tracts occupy residues 454–467 (LESGSWSNSHQTET), 1081–1095 (TDTHSESQSNVNGSA), and 1169–1184 (QSASSEHTEKGNNLSG).

The protein resides in the cell outer membrane. In terms of biological role, bacterial hemolysins are exotoxins that attack blood cell membranes and cause cell rupture by mechanisms not clearly defined. Functionally, cell-bound hemolysin, which releases heme-iron from erythrocytes by interaction with the erythrocyte membrane. HpmA requires HpmB function. This is Hemolysin (hpmA) from Proteus mirabilis.